A 364-amino-acid chain; its full sequence is Long-wave-sensitive opsin 1 (364 aa).

Over 1–52 (MAQRWGPQKLAGGQPQAGFEDSTQASIFTYTNNNATRDPFEGPNYHIAPRWV) the chain is Extracellular. O-linked (GlcNAc) serine glycosylation occurs at serine 22. Asparagine 34 carries an N-linked (GlcNAc...) asparagine glycan. The helical transmembrane segment at 53–77 (YHVTSAWMIFVVIASVFTNGLVLAA) threads the bilayer. The Cytoplasmic portion of the chain corresponds to 78–89 (TMRFKKLRHPLN). The chain crosses the membrane as a helical span at residues 90–115 (WILVNLAVADLAETIIASTISVVNQI). Residues 116–129 (YGYFVLGHPMCVVE) lie on the Extracellular side of the membrane. A disulfide bridge connects residues cysteine 126 and cysteine 203. Residues 130–149 (GYTVSLCGITGLWSLAIISW) traverse the membrane as a helical segment. At 150–168 (ERWMVVCKPFGNVRFDAKL) the chain is on the cytoplasmic side. Residues 169–192 (AVAGIAFSWIWAAVWTAPPIFGWS) traverse the membrane as a helical segment. At 193 to 218 (RYWPHGLKTSCGPDVFSGSSYPGVQS) the chain is on the extracellular side. The helical transmembrane segment at 219-246 (YMIVLMITCCIIPLSVIVLCYLQVWLAI) threads the bilayer. Residues 247 to 268 (RAVAKQQKESESTQKAEKEVTR) are Cytoplasmic-facing. A helical transmembrane segment spans residues 269 to 292 (MVMVMVFAFCLCWGPYTFFACFAA). The Extracellular segment spans residues 293–300 (AHPGYAFH). A helical transmembrane segment spans residues 301 to 325 (PLVAALPAYFAKSATIYNPIIYVFM). An N6-(retinylidene)lysine modification is found at lysine 312. Topologically, residues 326–364 (NRQFRNCILQLFGKKVDDSSELSSVSKTEASSVSSVSPA) are cytoplasmic.

It belongs to the G-protein coupled receptor 1 family. Opsin subfamily. Post-translationally, phosphorylated on some or all of the serine and threonine residues present in the C-terminal region. The three color pigments are found in the cone photoreceptor cells. Expressed in retina.

Its subcellular location is the membrane. Visual pigments are the light-absorbing molecules that mediate vision. They consist of an apoprotein, opsin, covalently linked to cis-retinal. The protein is Long-wave-sensitive opsin 1 (OPN1LW) of Equus caballus (Horse).